The following is a 292-amino-acid chain: (S)-phenoxypropionate/alpha-ketoglutarate-dioxygenase (292 aa).

Positions 108 and 110 each coordinate Fe cation. Residues Thr-135 and Trp-247 each contribute to the 2-oxoglutarate site. His-262 is a Fe cation binding site. Arg-273 is a binding site for 2-oxoglutarate.

It belongs to the TfdA dioxygenase family. As to quaternary structure, monomer. Requires Fe cation as cofactor. L-ascorbate is required as a cofactor.

The catalysed reaction is (S)-2-(4-chloro-2-methylphenoxy)propanoate + 2-oxoglutarate + O2 = 2-methyl-4-chlorophenol + pyruvate + succinate + CO2. It catalyses the reaction (S)-(2,4-dichlorophenoxy)propanoate + 2-oxoglutarate + O2 = 2,4-dichlorophenol + pyruvate + succinate + CO2. It functions in the pathway xenobiotic degradation; 2-(2,4-dichlorophenoxy)propanoate degradation. With respect to regulation, inhibited by divalent cations, most significantly by copper and nickel, and by diethylpyrocarbonate (DEPC). Its function is as follows. Involved in the degradation of the phenoxypropionate herbicides. Catalyzes the enantiospecific cleavage of the ether bond in the herbicid S-dichlorprop ((S)-2-(2,4-dichlorophenoxy)propionate)(S-2,4-DP) and S-mecoprop ((S)-2-(4-chloro-2-methylphenoxy)propionate)(S-2,4-MCPP). It can also accept (RS)-2-(4-chlorophenoxy)propionate, (RS)-2-(m-chlorophenoxy)propionate and phenoxyacetate derivatives such as 2,4-dichlorophenoxyacetate (2,4-D), however it can only accept 2-oxoglutarate as oxygen acceptor. The sequence is that of (S)-phenoxypropionate/alpha-ketoglutarate-dioxygenase from Delftia acidovorans (Pseudomonas acidovorans).